The following is a 126-amino-acid chain: Protein VraC (126 aa).

This is Protein VraC from Staphylococcus haemolyticus (strain JCSC1435).